Here is a 121-residue protein sequence, read N- to C-terminus: Prefoldin subunit beta (121 aa).

It belongs to the prefoldin subunit beta family. In terms of assembly, heterohexamer of two alpha and four beta subunits.

Its subcellular location is the cytoplasm. In terms of biological role, molecular chaperone capable of stabilizing a range of proteins. Seems to fulfill an ATP-independent, HSP70-like function in archaeal de novo protein folding. The chain is Prefoldin subunit beta (pfdB) from Methanothermobacter thermautotrophicus (strain ATCC 29096 / DSM 1053 / JCM 10044 / NBRC 100330 / Delta H) (Methanobacterium thermoautotrophicum).